Consider the following 622-residue polypeptide: Dynein axonemal assembly factor 1 (622 aa).

A compositionally biased stretch (polar residues) spans 1 to 11 (MHPEVSEQQAD). Residues 1–80 (MHPEVSEQQA…ARNDRDDRGP (80 aa)) are disordered. A compositionally biased stretch (basic and acidic residues) spans 32–42 (VRKEEINETKE). A compositionally biased stretch (low complexity) spans 48–59 (STTSCQSQKQQS). A compositionally biased stretch (basic and acidic residues) spans 62-80 (SRLECRSGYARNDRDDRGP). LRR repeat units follow at residues 101–123 (ALNDTLYLHFKGFDRIENLEEYT), 124–145 (GLRCLWLECNGIQRIENLQAQS), 146–167 (ELRCLFLQVNLLHKIENLEPLQ), 168–189 (KLDALNLSNNYIKTIENLSCLP), 190–211 (VLNTLQMAHNRLETVADIQHLG), and 215–236 (RLCVLDLSHNMLSDPEILSVLE). The LRRCT domain occupies 249-288 (NPVTKHIPNYRRTVTVRLKQLTYLDDRPVFPKDRACAEAW). Residues 326 to 336 (EERKKARDKGE) are compositionally biased toward basic and acidic residues. Positions 326-363 (EERKKARDKGETPLPDSEESSSTSPEAQEKPPLGETQE) are disordered. A compositionally biased stretch (low complexity) spans 337–351 (TPLPDSEESSSTSPE). Phosphoserine is present on residues serine 349, serine 464, and serine 487. 2 disordered regions span residues 481–505 (SSLSDDSDPELNDSSLPMLEHTPTG) and 535–622 (TATT…FGLD). 2 stretches are compositionally biased toward polar residues: residues 535-552 (TATTEVETQGQVFSTTRP) and 568-578 (EPNQSLPAQSS).

This sequence belongs to the DNAAF1 family.

It localises to the cell projection. The protein resides in the cilium. In terms of biological role, cilium-specific protein required for the stability of the ciliary architecture. Plays a role in cytoplasmic preassembly of dynein arms. Involved in regulation of microtubule-based cilia and actin-based brush border microvilli. The sequence is that of Dynein axonemal assembly factor 1 (Dnaaf1) from Peromyscus californicus (California mouse).